The chain runs to 500 residues: Lariat debranching enzyme (500 aa).

The interval Met-1–Pro-25 is disordered. Cys-48, His-50, Asp-79, and Asn-124 together coordinate a divalent metal cation. Residues Ser-164–Arg-194 are lariat recognition loop. His-222, His-274, and His-276 together coordinate a divalent metal cation. The tract at residues Asp-453–Glu-500 is disordered. A compositionally biased stretch (acidic residues) spans Asp-462–Phe-471. A compositionally biased stretch (basic and acidic residues) spans Val-472–Glu-500.

This sequence belongs to the lariat debranching enzyme family. Fe(2+) is required as a cofactor. Requires Zn(2+) as cofactor. It depends on Mn(2+) as a cofactor.

It localises to the nucleus. Active in presence of diverse metals including Fe(2+), Zn(2+), Mn(2+). Binds two metal cations in two adjacent alpha and beta metal-binding pockets. In terms of biological role, cleaves the 2'-5' phosphodiester linkage at the branch point of lariat intron pre-mRNAs after splicing and converts them into linear molecules that are subsequently degraded. It thereby facilitates ribonucleotide turnover. In Caenorhabditis elegans, this protein is Lariat debranching enzyme.